Here is a 692-residue protein sequence, read N- to C-terminus: UvrABC system protein B (692 aa).

The Helicase ATP-binding domain occupies 32 to 187; that stretch reads ENIENGEKAQ…LLNDLVGIQF (156 aa). An ATP-binding site is contributed by 45–52; it reads GATGTGKT. The Beta-hairpin signature appears at 98–121; sequence YYDYYQPEAYVPSSDTYIEKDSSV. The region spanning 436–631 is the Helicase C-terminal domain; the sequence is QIDDLVGEIH…TIKKEIRDLI (196 aa). The UVR domain maps to 656-691; sequence KALVKKLEKEMQQAAAALDFEGAAQLRDMVLELRAM.

The protein belongs to the UvrB family. In terms of assembly, forms a heterotetramer with UvrA during the search for lesions. Interacts with UvrC in an incision complex.

Its subcellular location is the cytoplasm. Its function is as follows. The UvrABC repair system catalyzes the recognition and processing of DNA lesions. A damage recognition complex composed of 2 UvrA and 2 UvrB subunits scans DNA for abnormalities. Upon binding of the UvrA(2)B(2) complex to a putative damaged site, the DNA wraps around one UvrB monomer. DNA wrap is dependent on ATP binding by UvrB and probably causes local melting of the DNA helix, facilitating insertion of UvrB beta-hairpin between the DNA strands. Then UvrB probes one DNA strand for the presence of a lesion. If a lesion is found the UvrA subunits dissociate and the UvrB-DNA preincision complex is formed. This complex is subsequently bound by UvrC and the second UvrB is released. If no lesion is found, the DNA wraps around the other UvrB subunit that will check the other stand for damage. This is UvrABC system protein B from Lactococcus lactis subsp. cremoris (strain SK11).